The chain runs to 974 residues: Kinesin-like protein KIN-7A (974 aa).

The disordered stretch occupies residues 1-29 (MTIKTPGTPVSKMDRTPAVTPGGSSRSRE). The Kinesin motor domain occupies 31–353 (KIVVTVRLRP…LYFANRAKEV (323 aa)). ATP is bound at residue 117–124 (GQTSSGKT). 2 coiled-coil regions span residues 362 to 435 (VVSD…KGLN) and 565 to 603 (SANL…VMSL). Disordered stretches follow at residues 605–649 (SNIS…PCSP) and 663–713 (NKAP…SSVN). Residues 616–628 (TKNHHHQSKKKKL) show a composition bias toward basic residues. 2 stretches are compositionally biased toward polar residues: residues 638–649 (NRQNFLKSPCSP) and 666–682 (PQEN…TPQG). The segment covering 683-693 (SEKETPQKGEE) has biased composition (basic and acidic residues).

The protein belongs to the TRAFAC class myosin-kinesin ATPase superfamily. Kinesin family. KIN-7 subfamily. Phosphorylated at Thr-145, Thr-687 and Thr-703 by CDKAs and CDKBs. Phosphorylated NACK1 fails to mediate cytokinesis. Expressed in roots, flowers, pollen mother cells and embryos.

It localises to the cytoplasm. Its subcellular location is the cytoskeleton. The protein localises to the phragmoplast. Functionally, probable plus end-directed motor protein that functions in the NACK-PQR (ANP1-MKK6-MPK4) MAP kinase signaling pathway, which is essential for somatic cell cytokinesis, especially for the cell-plate formation and its expansion. Regulates the activity and the localization of ANP1, probably by association through the non-catalytic region of the kinase. Functionally redundant with NACK2 and essential to promote the progression of cytokinesis and for cellularization (formation of the cell plate) during microgametogenesis and megagametogenesis. In Arabidopsis thaliana (Mouse-ear cress), this protein is Kinesin-like protein KIN-7A.